The primary structure comprises 134 residues: Rubredoxin-2 (134 aa).

The Rubredoxin-like domain maps to 1–53 (MAKYQCPDCQYIYDECKGEPHEGFQPNTNWGEIPEEWACPDCAVRDKIDFKML). Positions 6, 9, 39, and 42 each coordinate Fe cation. The segment covering 99–116 (SITDERENTPDNKVERRS) has biased composition (basic and acidic residues). The disordered stretch occupies residues 99-134 (SITDERENTPDNKVERRSQSQAVRRSSVKKIKNNKR). The segment covering 124–134 (SSVKKIKNNKR) has biased composition (basic residues).

It belongs to the rubredoxin family. Requires Fe(3+) as cofactor.

Its subcellular location is the cytoplasm. It participates in hydrocarbon metabolism; alkane degradation. Functionally, involved in the hydrocarbon hydroxylating system, which transfers electrons from NADH to rubredoxin reductase and then through rubredoxin to alkane 1 monooxygenase. The chain is Rubredoxin-2 (alkF) from Pseudomonas putida (Arthrobacter siderocapsulatus).